The primary structure comprises 931 residues: Aconitate hydratase A (931 aa).

The tract at residues 402–454 (SASPVDEASAESFPASDAPAYGSQENGAGAPQHADGTGAAVPSNPVTVTAPDG) is disordered. [4Fe-4S] cluster contacts are provided by cysteine 472, cysteine 538, and cysteine 541.

It belongs to the aconitase/IPM isomerase family. Requires [4Fe-4S] cluster as cofactor.

The enzyme catalyses citrate = D-threo-isocitrate. The catalysed reaction is citrate = cis-aconitate + H2O. It catalyses the reaction cis-aconitate + H2O = D-threo-isocitrate. It participates in carbohydrate metabolism; tricarboxylic acid cycle; isocitrate from oxaloacetate: step 2/2. Catalyzes the reversible isomerization of citrate to isocitrate via cis-aconitate in the tricarboxylic acid (TCA) cycle. Aconitase activity is important for the initiation of morphological and physiological differentiation of S.viridochromogenes. In addition, the apo form of AcnA (lacking the [4Fe-4S] cluster) functions as a RNA-binding regulatory protein, which binds to iron responsive elements (IREs) located on the untranslated region of certain mRNAs, including recA and ftsZ. Binding to IRE-like structures probably alters the target mRNA stability and regulates the protein amount. The apo form plays a regulatory role in oxidative stress response. The sequence is that of Aconitate hydratase A from Streptomyces viridochromogenes (strain DSM 40736 / JCM 4977 / BCRC 1201 / Tue 494).